A 197-amino-acid chain; its full sequence is Holliday junction branch migration complex subunit RuvA (197 aa).

The tract at residues 1-64 is domain I; the sequence is MIARLAGKVA…QDAIELYGFA (64 aa). The domain II stretch occupies residues 65-141; that stretch reads SEDEEAVFRA…LALLARAAGP (77 aa). The tract at residues 141–145 is flexible linker; the sequence is PARAK. Positions 146-197 are domain III; sequence PGAGVVEQLRQALVNLGYKPPQADAAADALRDEAEGKKLDELLREALKRLRG.

It belongs to the RuvA family. Homotetramer. Forms an RuvA(8)-RuvB(12)-Holliday junction (HJ) complex. HJ DNA is sandwiched between 2 RuvA tetramers; dsDNA enters through RuvA and exits via RuvB. An RuvB hexamer assembles on each DNA strand where it exits the tetramer. Each RuvB hexamer is contacted by two RuvA subunits (via domain III) on 2 adjacent RuvB subunits; this complex drives branch migration. In the full resolvosome a probable DNA-RuvA(4)-RuvB(12)-RuvC(2) complex forms which resolves the HJ.

It is found in the cytoplasm. Functionally, the RuvA-RuvB-RuvC complex processes Holliday junction (HJ) DNA during genetic recombination and DNA repair, while the RuvA-RuvB complex plays an important role in the rescue of blocked DNA replication forks via replication fork reversal (RFR). RuvA specifically binds to HJ cruciform DNA, conferring on it an open structure. The RuvB hexamer acts as an ATP-dependent pump, pulling dsDNA into and through the RuvAB complex. HJ branch migration allows RuvC to scan DNA until it finds its consensus sequence, where it cleaves and resolves the cruciform DNA. The sequence is that of Holliday junction branch migration complex subunit RuvA from Anaeromyxobacter sp. (strain Fw109-5).